A 294-amino-acid polypeptide reads, in one-letter code: Pyridoxal 5'-phosphate synthase subunit PdxS (294 aa).

Asp-24 lines the D-ribose 5-phosphate pocket. The Schiff-base intermediate with D-ribose 5-phosphate role is filled by Lys-81. Position 153 (Gly-153) interacts with D-ribose 5-phosphate. Arg-165 is a D-glyceraldehyde 3-phosphate binding site. D-ribose 5-phosphate-binding positions include Gly-214 and Gly-235 to Ser-236.

It belongs to the PdxS/SNZ family. As to quaternary structure, in the presence of PdxT, forms a dodecamer of heterodimers.

It catalyses the reaction aldehydo-D-ribose 5-phosphate + D-glyceraldehyde 3-phosphate + L-glutamine = pyridoxal 5'-phosphate + L-glutamate + phosphate + 3 H2O + H(+). It participates in cofactor biosynthesis; pyridoxal 5'-phosphate biosynthesis. In terms of biological role, catalyzes the formation of pyridoxal 5'-phosphate from ribose 5-phosphate (RBP), glyceraldehyde 3-phosphate (G3P) and ammonia. The ammonia is provided by the PdxT subunit. Can also use ribulose 5-phosphate and dihydroxyacetone phosphate as substrates, resulting from enzyme-catalyzed isomerization of RBP and G3P, respectively. The polypeptide is Pyridoxal 5'-phosphate synthase subunit PdxS (Anoxybacillus flavithermus (strain DSM 21510 / WK1)).